A 137-amino-acid chain; its full sequence is Proofreading thioesterase EntH (137 aa).

The Nucleophile or proton acceptor role is filled by Glu63.

It belongs to the thioesterase PaaI family. Homotetramer. Dimer of dimers. Interacts specifically with the aryl carrier protein (ArCP) domain of EntB.

It localises to the cytoplasm. Its pathway is siderophore biosynthesis; enterobactin biosynthesis. Functionally, required for optimal enterobactin synthesis. Acts as a proofreading enzyme that prevents EntB misacylation by hydrolyzing the thioester bound existing between EntB and wrongly charged molecules. The sequence is that of Proofreading thioesterase EntH from Cronobacter sakazakii (strain ATCC BAA-894) (Enterobacter sakazakii).